A 280-amino-acid chain; its full sequence is NAD-capped RNA hydrolase NudC (280 aa).

Arginine 83 provides a ligand contact to substrate. The Zn(2+) site is built by cysteine 113, cysteine 116, cysteine 131, and cysteine 134. Tyrosine 139 provides a ligand contact to substrate. In terms of domain architecture, Nudix hydrolase spans 140 to 268 (PRVAPAIIVL…ASRRLLDDAL (129 aa)). The a divalent metal cation site is built by alanine 177, glutamate 193, and glutamate 197. Positions 178–199 (GFVEPSETLEAAVHREVGEEVG) match the Nudix box motif. 211–218 (QPWPFPHS) contacts substrate. Residue glutamate 238 participates in a divalent metal cation binding.

This sequence belongs to the Nudix hydrolase family. NudC subfamily. As to quaternary structure, homodimer. Mg(2+) is required as a cofactor. Mn(2+) serves as cofactor. The cofactor is Zn(2+).

The enzyme catalyses a 5'-end NAD(+)-phospho-ribonucleoside in mRNA + H2O = a 5'-end phospho-adenosine-phospho-ribonucleoside in mRNA + beta-nicotinamide D-ribonucleotide + 2 H(+). It catalyses the reaction NAD(+) + H2O = beta-nicotinamide D-ribonucleotide + AMP + 2 H(+). The catalysed reaction is NADH + H2O = reduced beta-nicotinamide D-ribonucleotide + AMP + 2 H(+). Its function is as follows. mRNA decapping enzyme that specifically removes the nicotinamide adenine dinucleotide (NAD) cap from a subset of mRNAs by hydrolyzing the diphosphate linkage to produce nicotinamide mononucleotide (NMN) and 5' monophosphate mRNA. The NAD-cap is present at the 5'-end of some mRNAs and stabilizes RNA against 5'-processing. Has preference for mRNAs with a 5'-end purine. Catalyzes the hydrolysis of a broad range of dinucleotide pyrophosphates. The sequence is that of NAD-capped RNA hydrolase NudC from Deinococcus radiodurans (strain ATCC 13939 / DSM 20539 / JCM 16871 / CCUG 27074 / LMG 4051 / NBRC 15346 / NCIMB 9279 / VKM B-1422 / R1).